The primary structure comprises 126 residues: MPDPSKSAPAPKKGSKKAVTKAQKKDGKKRKRGRKESYSIYVYKVLKQVHPDTGISSKAMGIMNSFVNDIFERIASEASRLAHYNKRSTITSREVQTAVRLLLPGELAKHAVSEGTKAVTKYTSSK.

Residues 1-12 (MPDPSKSAPAPK) show a composition bias toward low complexity. The segment at 1–35 (MPDPSKSAPAPKKGSKKAVTKAQKKDGKKRKRGRK) is disordered. At proline 2 the chain carries N-acetylproline. At lysine 6 the chain carries N6-(2-hydroxyisobutyryl)lysine; alternate. Lysine 6 carries the post-translational modification N6-(beta-hydroxybutyryl)lysine; alternate. Residue lysine 6 is modified to N6-acetyllysine; alternate. N6-butyryllysine; alternate is present on lysine 6. N6-crotonyllysine; alternate is present on lysine 6. Lysine 6 is modified (N6-lactoyllysine; alternate). Lysine 6 is covalently cross-linked (Glycyl lysine isopeptide (Lys-Gly) (interchain with G-Cter in SUMO2); alternate). Serine 7 carries the ADP-ribosylserine modification. Lysine 12 is modified (N6-(beta-hydroxybutyryl)lysine; alternate). Residues lysine 12 and lysine 13 each carry the N6-acetyllysine; alternate modification. An N6-crotonyllysine; alternate mark is found at lysine 12 and lysine 13. Residue lysine 12 is modified to N6-lactoyllysine; alternate. Lysine 13 is subject to N6-(2-hydroxyisobutyryl)lysine; alternate. Serine 15 bears the Phosphoserine; by STK4/MST1 mark. An N6-acetyllysine; alternate mark is found at lysine 16, lysine 17, lysine 21, and lysine 24. N6-crotonyllysine; alternate is present on residues lysine 16, lysine 17, lysine 21, and lysine 24. Residues lysine 16, lysine 17, lysine 21, and lysine 24 each carry the N6-lactoyllysine; alternate modification. Residues lysine 17 and lysine 21 each carry the N6-(beta-hydroxybutyryl)lysine; alternate modification. Lysine 17 is subject to N6-glutaryllysine; alternate. N6-(2-hydroxyisobutyryl)lysine; alternate is present on residues lysine 21 and lysine 24. An N6-butyryllysine; alternate modification is found at lysine 21. A Glycyl lysine isopeptide (Lys-Gly) (interchain with G-Cter in SUMO2); alternate cross-link involves residue lysine 21. Lysine 25 carries the N6-(2-hydroxyisobutyryl)lysine modification. Residue lysine 35 is modified to N6-(2-hydroxyisobutyryl)lysine; alternate. At lysine 35 the chain carries N6-(beta-hydroxybutyryl)lysine; alternate. Lysine 35 is subject to N6-crotonyllysine; alternate. Lysine 35 is modified (N6-glutaryllysine; alternate). At lysine 35 the chain carries N6-succinyllysine; alternate. A Glycyl lysine isopeptide (Lys-Gly) (interchain with G-Cter in ubiquitin); alternate cross-link involves residue lysine 35. A PolyADP-ribosyl glutamic acid modification is found at glutamate 36. A Phosphoserine; by AMPK modification is found at serine 37. N6-(2-hydroxyisobutyryl)lysine; alternate occurs at positions 44, 47, and 58. Lysine 44 bears the N6-lactoyllysine; alternate mark. N6-glutaryllysine; alternate occurs at positions 44 and 47. Lysine 47 bears the N6-methyllysine; alternate mark. An N6,N6-dimethyllysine; alternate modification is found at lysine 58. Arginine 80 is modified (dimethylated arginine). Lysine 86 carries the N6-(2-hydroxyisobutyryl)lysine; alternate modification. N6-(beta-hydroxybutyryl)lysine; alternate is present on lysine 86. Lysine 86 carries the post-translational modification N6-acetyllysine; alternate. Lysine 86 is modified (N6-lactoyllysine; alternate). The residue at position 86 (lysine 86) is an N6,N6,N6-trimethyllysine; alternate. Omega-N-methylarginine occurs at positions 87 and 93. The residue at position 109 (lysine 109) is an N6-(2-hydroxyisobutyryl)lysine; alternate. Lysine 109 carries the post-translational modification N6-lactoyllysine; alternate. An N6-glutaryllysine; alternate modification is found at lysine 109. The residue at position 109 (lysine 109) is an N6-methyllysine; alternate. O-linked (GlcNAc) serine glycosylation occurs at serine 113. Threonine 116 is subject to Phosphothreonine. N6-(2-hydroxyisobutyryl)lysine; alternate is present on residues lysine 117 and lysine 121. 2 positions are modified to N6-(beta-hydroxybutyryl)lysine; alternate: lysine 117 and lysine 121. Residues lysine 117 and lysine 121 each carry the N6-lactoyllysine; alternate modification. N6-glutaryllysine; alternate occurs at positions 117 and 121. An N6-succinyllysine; alternate mark is found at lysine 117 and lysine 121. Lysine 117 carries the N6-malonyllysine; alternate modification. Position 117 is an N6-methylated lysine; alternate (lysine 117). Lysine 121 participates in a covalent cross-link: Glycyl lysine isopeptide (Lys-Gly) (interchain with G-Cter in ubiquitin); alternate.

The protein belongs to the histone H2B family. The nucleosome is a histone octamer containing two molecules each of H2A, H2B, H3 and H4 assembled in one H3-H4 heterotetramer and two H2A-H2B heterodimers. The octamer wraps approximately 147 bp of DNA. Monoubiquitination at Lys-35 (H2BK34Ub) by the MSL1/MSL2 dimer is required for histone H3 'Lys-4' (H3K4me) and 'Lys-79' (H3K79me) methylation and transcription activation at specific gene loci, such as HOXA9 and MEIS1 loci. Similarly, monoubiquitination at Lys-121 (H2BK120Ub) by the RNF20/40 complex gives a specific tag for epigenetic transcriptional activation and is also prerequisite for histone H3 'Lys-4' and 'Lys-79' methylation. It also functions cooperatively with the FACT dimer to stimulate elongation by RNA polymerase II. H2BK120Ub also acts as a regulator of mRNA splicing: deubiquitination by USP49 is required for efficient cotranscriptional splicing of a large set of exons. Post-translationally, phosphorylation at Ser-37 (H2BS36ph) by AMPK in response to stress promotes transcription. Phosphorylated on Ser-15 (H2BS14ph) by STK4/MST1 during apoptosis; which facilitates apoptotic chromatin condensation. Also phosphorylated on Ser-15 in response to DNA double strand breaks (DSBs), and in correlation with somatic hypermutation and immunoglobulin class-switch recombination. In terms of processing, glcNAcylation at Ser-113 promotes monoubiquitination of Lys-121. It fluctuates in response to extracellular glucose, and associates with transcribed genes. ADP-ribosylated by PARP1 or PARP2 on Ser-7 (H2BS6ADPr) in response to DNA damage. H2BS6ADPr promotes recruitment of CHD1L. Poly ADP-ribosylation on Glu-36 (H2BE35ADPr) by PARP1 regulates adipogenesis: it inhibits phosphorylation at Ser-37 (H2BS36ph), thereby blocking expression of pro-adipogenetic genes. Post-translationally, crotonylation (Kcr) is specifically present in male germ cells and marks testis-specific genes in post-meiotic cells, including X-linked genes that escape sex chromosome inactivation in haploid cells. Crotonylation marks active promoters and enhancers and confers resistance to transcriptional repressors. It is also associated with post-meiotically activated genes on autosomes. In terms of processing, lactylated in macrophages by EP300/P300 by using lactoyl-CoA directly derived from endogenous or exogenous lactate, leading to stimulates gene transcription.

The protein localises to the nucleus. The protein resides in the chromosome. Core component of nucleosome. Nucleosomes wrap and compact DNA into chromatin, limiting DNA accessibility to the cellular machineries which require DNA as a template. Histones thereby play a central role in transcription regulation, DNA repair, DNA replication and chromosomal stability. DNA accessibility is regulated via a complex set of post-translational modifications of histones, also called histone code, and nucleosome remodeling. The protein is Histone H2B type 3-B of Homo sapiens (Human).